The following is a 300-amino-acid chain: Protein CANDIDATE G-PROTEIN COUPLED RECEPTOR 2 (300 aa).

Transmembrane regions (helical) follow at residues 37-57 (GFLHNTVLVLASILFVAYLAY), 73-93 (IMIAYYGFLWLVSLLNLAWCC), 110-130 (LTLFTTSGMLFLEVSLVAFLF), 152-172 (IGLDLLLKAIYLFGFGVPLFI), 183-203 (WGLWVIHKLLLAGIYGMIFFM), 222-242 (ITVMLALNGLSLFACALTANG), and 245-265 (FGLWLYGITSVCYHAFYLPLL).

This sequence belongs to the UPF0359 family. In terms of assembly, interacts with GPA1. As to expression, expressed at low levels in seedlings.

The protein resides in the cell membrane. Its function is as follows. Plays a role in plants and microbes interactions. G-protein coupled melatonin receptor involved in root growth mediated by the bacterial quorum-sensing signals N-acyl-homoserine lactones (AHLs). Binds to melatonin. Phytomelatonin receptor required, in collaboration with GPA1, for melatonin-mediated stomatal closure involving H(2)O(2) and Ca(2+) signals. Essential for melatonin-mediated plant response to osmotic stress probably by activating reactive oxygen species (ROS) scavenging ability. This Arabidopsis thaliana (Mouse-ear cress) protein is Protein CANDIDATE G-PROTEIN COUPLED RECEPTOR 2.